A 117-amino-acid chain; its full sequence is NADH-ubiquinone oxidoreductase chain 3 (117 aa).

3 helical membrane passes run 6-26, 58-78, and 85-105; these read ILILLIISGTLSILILGASYI, FFLIGILFLIFDLEISFLFPW, and LPLFGYWVVMLFLFILTLGLI.

The protein belongs to the complex I subunit 3 family.

It localises to the mitochondrion membrane. It carries out the reaction a ubiquinone + NADH + 5 H(+)(in) = a ubiquinol + NAD(+) + 4 H(+)(out). Its function is as follows. Core subunit of the mitochondrial membrane respiratory chain NADH dehydrogenase (Complex I) that is believed to belong to the minimal assembly required for catalysis. Complex I functions in the transfer of electrons from NADH to the respiratory chain. The immediate electron acceptor for the enzyme is believed to be ubiquinone. The chain is NADH-ubiquinone oxidoreductase chain 3 (ND3) from Sarcophyton glaucum (Toadstool umbrella leather coral).